The sequence spans 349 residues: uncharacterized protein (349 aa).

An N-terminal signal peptide occupies residues 1–29 (MKQKYENYFKKRLILNLLIFLLLACSSES).

This is an uncharacterized protein from Borreliella burgdorferi (strain ATCC 35210 / DSM 4680 / CIP 102532 / B31) (Borrelia burgdorferi).